Reading from the N-terminus, the 369-residue chain is MHENFDKRLELLLEGLALTRRSLFDPEGKENELKELEQQAVQDGFWDDVVRAGKISERIARLKQQLSEFNELKNKVSAIQFFLEDEESSKDLEMQKELEKEFVFCEKKITEWETLRLLSGELDRNSCFLSINAGAGGTESCDWVEMLLRMYMRWASSHSWRIEVIDRLDGEVAGIKHITLKLVGEYAYGYAKAESGVHRLVRISPFDSNAKRHTSFASVEVFPEIDDKIEVEIRPGDIRIDTYRSSGAGGQHVNVTDSAVRITHFPTGIVVSCQNERSQIQNREACMNMLRARIYQKLLQERLEKQNIDRKNKKEISWGSQIRNYVFQPYTLVKDVRTGYEVGNIQAMMDGELLDAFIKAYLVDYGEIT.

Gln-251 carries the N5-methylglutamine modification.

It belongs to the prokaryotic/mitochondrial release factor family. Methylated by PrmC. Methylation increases the termination efficiency of RF2.

It localises to the cytoplasm. Peptide chain release factor 2 directs the termination of translation in response to the peptide chain termination codons UGA and UAA. This Chlamydia trachomatis serovar A (strain ATCC VR-571B / DSM 19440 / HAR-13) protein is Peptide chain release factor 2.